The chain runs to 69 residues: Metallothionein-like protein 3 (69 aa).

It belongs to the metallothionein superfamily. Type 15 family. In terms of tissue distribution, expressed in leaf mesophyll cells, root tips, and at low levels in anthers.

Functionally, metallothioneins have a high content of cysteine residues that bind various heavy metals. Functions as a metal chelator of copper (Cu) and zinc (Zn). Plays a role in Cu homeostasis, specifically in the remobilization of Cu from senescing leaves. The mobilization of Cu from internal sources is important for seed development. The chain is Metallothionein-like protein 3 from Arabidopsis thaliana (Mouse-ear cress).